Consider the following 143-residue polypeptide: Hypoxic response protein 1 (143 aa).

CBS domains lie at 8–65 and 73–131; these read MNAG…GLDP and LARD…IVQF. Cys14 and Cys39 are oxidised to a cystine. 2 residues coordinate Zn(2+): His97 and His122.

In terms of assembly, homodimer.

It localises to the secreted. In terms of biological role, unlike some other CBS-domain containing proteins does not seem to bind AMP. The protein is Hypoxic response protein 1 (hrp1) of Mycobacterium tuberculosis (strain CDC 1551 / Oshkosh).